The sequence spans 2472 residues: Nuclear receptor corepressor 2 (2472 aa).

3 disordered regions span residues 1–20, 47–168, and 190–220; these read MSGS…PRYP, RDYT…SRLS, and ISKL…PPIE. R18 carries the post-translational modification Asymmetric dimethylarginine. Residues 51 to 60 are compositionally biased toward polar residues; sequence SHLSPGSIIQ. A phosphoserine mark is found at S54 and S67. Composition is skewed to basic and acidic residues over residues 78–88 and 96–112; these read RSQELHLRPES and GKPD…RLEL. Phosphoserine occurs at positions 149 and 152. The stretch at 165–207 forms a coiled coil; the sequence is SRLSKEELIQNMDRVDREITMVEQQISKLKKKQQQLEEEAAKP. Residues 203-212 show a composition bias toward basic and acidic residues; the sequence is EAAKPPEPEK. S215 is subject to Phosphoserine. An interaction with SIN3A/B region spans residues 254 to 312; sequence LPLYNQPSDTRQYHENIKINQAMRKKLILYFKRRNHARKQWEQRFCQRYDQLMEAWEKK. Positions 389-480 are deacetylase activation domain (DAD); it reads MRQLAVIPPM…YLTKKNENYK (92 aa). Residues 427–478 form the SANT 1 domain; the sequence is QVTNMWSEQERDTFREKFMQHPKNFGLIASFLERKTVAECVLYYYLTKKNEN. Residues K449, Y470, and Y471 each contribute to the 1D-myo-inositol 1,4,5,6-tetrakisphosphate site. Disordered regions lie at residues 487–618, 665–1107, and 1173–1197; these read YRRR…EMET, HKLK…RPPI, and SATS…YRGS. The stretch at 492 to 560 forms a coiled coil; the sequence is KSQQQQQQQQ…GEDNDEKEAV (69 aa). The residue at position 493 (S493) is a Phosphoserine. A compositionally biased stretch (low complexity) spans 494 to 507; the sequence is QQQQQQQQQQQQQQ. Basic and acidic residues predominate over residues 512–548; sequence SQEEKEEKEKEKEADKEEEKQDAENEKEELSKEKTDD. T549 is modified (phosphothreonine). S550 bears the Phosphoserine mark. Residues 592 to 609 show a composition bias toward polar residues; the sequence is ATPQQSSELASMEMNESS. Residues 606-657 enclose the SANT 2 domain; sequence NESSRWTEEEMETAKKGLLEHGRNWSAIARMVGSKTVSQCKNFYFNYKKRQN. The stretch at 658 to 682 forms a coiled coil; that stretch reads LDEILQQHKLKMEKERNARRKKKKT. The segment covering 709-718 has biased composition (acidic residues); sequence NEEELAEEAE. Over residues 739-750 the composition is skewed to polar residues; it reads VNNSSDTESVPS. Phosphoserine occurs at positions 747 and 750. 2 stretches are compositionally biased toward pro residues: residues 773–782 and 789–811; these read TQPPVPPPEE and EPSP…PAAP. Basic and acidic residues-rich tracts occupy residues 831-850 and 859-868; these read EDAK…KPEE and ESVKSDHKEE. An N6-acetyllysine modification is found at K878. Positions 905–919 are enriched in low complexity; the sequence is GSSSGATQDSDSSAT. Phosphoserine is present on S938. T945 bears the Phosphothreonine mark. A Phosphoserine modification is found at S955. K958 carries the post-translational modification N6-acetyllysine. Basic and acidic residues predominate over residues 978–988; sequence KVHEPPREDTV. A compositionally biased stretch (pro residues) spans 989–1000; the sequence is PPKPVPPVPPPT. A compositionally biased stretch (low complexity) spans 1090 to 1101; it reads LPLGLHDSARPV. K1181 and K1209 each carry N6-acetyllysine. S1220 is subject to Phosphoserine. Disordered regions lie at residues 1254 to 1277, 1345 to 1378, and 1410 to 1443; these read SVSQ…AAPK, LKRE…LKLK, and PLAP…KHDV. Phosphothreonine is present on T1350. The span at 1359–1368 shows a compositional bias: basic and acidic residues; it reads DLTETYKPRP. 3 positions are modified to phosphoserine: S1449, S1509, and S1565. A disordered region spans residues 1479 to 1578; that stretch reads KSRSGTSSGA…TVPEHHPHPI (100 aa). An Asymmetric dimethylarginine modification is found at R1624. The interval 1734 to 1826 is disordered; the sequence is TAPPPFSSRH…PISPRTQDAL (93 aa). Positions 1740–1753 are enriched in low complexity; that stretch reads SSRHSSSPLSPGGP. Phosphoserine is present on residues S1746 and S1749. Residues 1765 to 1778 are compositionally biased toward basic and acidic residues; sequence SERERERERERDKS. Polar residues predominate over residues 1807–1826; sequence RPASHTHQHSPISPRTQDAL. The residue at position 1819 (S1819) is a Phosphoserine. Omega-N-methylarginine is present on R1854. Disordered regions lie at residues 1857 to 1878, 1898 to 1986, and 2001 to 2078; these read RSTS…THCP, KETS…KPFS, and AGYS…LQTA. Basic and acidic residues predominate over residues 1899–1913; it reads ETSRVARPERPRVDA. Residue K1920 is modified to N6-acetyllysine. Residues 1925–1938 are compositionally biased toward low complexity; it reads EPASSPSKSSEPRS. Position 1963 is a phosphoserine (S1963). Position 1983 is an N6-acetyllysine (K1983). 5 positions are modified to phosphoserine: S2004, S2012, S2015, S2016, and S2018. At T2020 the chain carries Phosphothreonine. A compositionally biased stretch (basic and acidic residues) spans 2020–2043; that stretch reads THDKGLSKPLEELEKSHLEGELRH. The residue at position 2035 (S2035) is a Phosphoserine. The segment covering 2064 to 2075 has biased composition (low complexity); sequence LPESQPSSSPLL. A required for interaction with RARA in the absence of its ligand region spans residues 2086 to 2090; it reads RVVTL. The short motif at 2094–2098 is the CORNR box of ID1 element; it reads ISEVI. A disordered region spans residues 2132-2226; the sequence is RRPPSDLYLP…GNTSQPPAFF (95 aa). Phosphoserine occurs at positions 2161, 2181, and 2215. A CORNR box of ID2 motif is present at residues 2296–2300; sequence LEAII. The disordered stretch occupies residues 2343–2459; that stretch reads GRSDHALTSP…HHAWDEEPKP (117 aa). S2371 carries the post-translational modification Phosphoserine. Over residues 2439–2450 the composition is skewed to low complexity; sequence LAAGSGPLAGPH.

It belongs to the N-CoR nuclear receptor corepressors family. In terms of assembly, forms a large corepressor complex that contains SIN3A/B and histone deacetylases HDAC1 and HDAC2. This complex associates with the thyroid (TR) and the retinoid acid receptors (RAR) in the absence of ligand, and may stabilize their interaction with TFIIB. Interacts directly with RARA in the absence of ligand; the interaction represses RARA activity. Interacts (isoform SMRT) with HDAC10. Interacts with MINT. Component of the N-Cor repressor complex, at least composed of NCOR1, NCOR2, HDAC3, TBL1X, TBL1R, CORO2A and GPS2. Interacts with CBFA2T3 and ATXN1L. Interacts with RARB; the interaction is weak and does not repress RARB transactivational activity. Interacts (via 1D-myo-inositol 1,4,5,6-tetrakisphosphate) with HDAC3; promoting the histone deacetylase activity of HDAC3. Interacts with HDAC7 and C1D. Interacts with NR4A2; this interaction increases in the absence of PITX3. Interacts with BCL6 (via the BTB domain), required for BCL6 transcriptional repressor activity on a subset of target genes. Forms ternary complexes with BCOR and BCL6 on target gene promoters but, on enhancer elements, interacts with BCL6 and HDAC3 to repress proximal gene expression. May interact with DEAF1. Interacts with RXRA. Interacts with MECP2. Interacts with ZBTB7A. Interacts with AR. Interacts with TBL1Y. Interacts with SANBR (via the BTB domain). As to expression, ubiquitous. Also widely expressed in early embryos.

It localises to the nucleus. In terms of biological role, transcriptional corepressor that mediates the transcriptional repression activity of some nuclear receptors by promoting chromatin condensation, thus preventing access of the basal transcription. Acts by recruiting chromatin modifiers, such as histone deacetylases HDAC1, HDAC2 and HDAC3. Required to activate the histone deacetylase activity of HDAC3. Involved in the regulation BCL6-dependent of the germinal center (GC) reactions, mainly through the control of the GC B-cells proliferation and survival. Recruited by ZBTB7A to the androgen response elements/ARE on target genes, negatively regulates androgen receptor signaling and androgen-induced cell proliferation. In Mus musculus (Mouse), this protein is Nuclear receptor corepressor 2 (Ncor2).